A 117-amino-acid polypeptide reads, in one-letter code: UPF0342 protein lmo2223 (117 aa).

It belongs to the UPF0342 family.

This chain is UPF0342 protein lmo2223, found in Listeria monocytogenes serovar 1/2a (strain ATCC BAA-679 / EGD-e).